Here is a 1241-residue protein sequence, read N- to C-terminus: Sterol 3-beta-glucosyltransferase (1241 aa).

The span at 1-11 (MSGIESTEEPC) shows a compositional bias: acidic residues. Disordered stretches follow at residues 1–97 (MSGI…KPSI) and 124–189 (DQQV…TLRK). The segment covering 25–34 (PEERQTRKDS) has biased composition (basic and acidic residues). Positions 136–155 (ESEDQQADESSDEQEDDDQD) are enriched in acidic residues. The GRAM 1 domain maps to 220–267 (NKLKRTFDISDTDVFISDYPCWLMGDVLLQGHLYITKHHILFFAFLPK). The PH domain occupies 271-373 (SISKSGALTT…WVSSLKKHIF (103 aa)). The tract at residues 499 to 556 (DDFSQEQESAESSKPVSDDEIVSADDNQELEEKQPQDNLANAEKENHDKVSRANSRRT) is disordered. The span at 516–527 (DDEIVSADDNQE) shows a compositional bias: acidic residues. Positions 540-549 (AEKENHDKVS) are enriched in basic and acidic residues. Residues 609–675 (ERFRKHFSLT…SDIENVNKEK (67 aa)) enclose the GRAM 2 domain. A disordered region spans residues 720 to 741 (KGSTDSSPPNASEGSSDESCNL). Positions 723–741 (TDSSPPNASEGSSDESCNL) are enriched in polar residues. Residues S797, R798, D800, N1071, V1098, H1100, H1113, S1116, G1117, T1118, D1137, and Q1138 each contribute to the UDP-alpha-D-glucose site.

This sequence belongs to the glycosyltransferase 28 family.

Its subcellular location is the cytoplasm. It is found in the preautophagosomal structure membrane. It carries out the reaction a sterol + UDP-alpha-D-glucose = a sterol 3-beta-D-glucoside + UDP + H(+). The catalysed reaction is ergosterol + UDP-alpha-D-glucose = ergosteryl 3-beta-D-glucoside + UDP + H(+). Sterol glycosyltransferase responsible for the glycosylation of ergosterol to form ergosterol-glucoside. Mediates autophagic degradation of peroxisomes (pexophagy). The sequence is that of Sterol 3-beta-glucosyltransferase from Pichia angusta (Yeast).